The sequence spans 328 residues: MAKPAKRVAVTGAAGQIAYSLLFRIANGDLLGKDQPVILQLLDLPQAQAAVKGVVMELEDCAFPLLAGVVITDDPKVAFKDADVALLVGARPRSKGMERKDLLSANAEIFTVQGAALNEVASRDVKVLVVGNPANTNAYIAMKSAPDLPKKNFTAMLRLDHNRALSQLAAKTGKPVASIEKLAVWGNHSPTMYPDFRFATAEGESMLKLVNDDVWNRETFIPTVGKRGAAIIEARGLSSAASAANAAIDHVRDWVLGTNGKWVTMGIPSDGSYGIPEDIIYGVPVTCENGEYKRVEGLEIDAFSREKMDGTLAELLEERDGVAHLLKN.

An NAD(+)-binding site is contributed by 12-18 (GAAGQIA). Substrate contacts are provided by arginine 93 and arginine 99. Residues asparagine 106, glutamine 113, and 130–132 (VGN) contribute to the NAD(+) site. Positions 132 and 163 each coordinate substrate. Histidine 188 acts as the Proton acceptor in catalysis.

The protein belongs to the LDH/MDH superfamily. MDH type 2 family.

It catalyses the reaction (S)-malate + NAD(+) = oxaloacetate + NADH + H(+). Functionally, catalyzes the reversible oxidation of malate to oxaloacetate. This chain is Malate dehydrogenase 2, found in Burkholderia vietnamiensis (strain G4 / LMG 22486) (Burkholderia cepacia (strain R1808)).